We begin with the raw amino-acid sequence, 237 residues long: UPF0174 protein YaaW (237 aa).

The protein belongs to the UPF0174 family.

This Escherichia coli (strain K12) protein is UPF0174 protein YaaW (yaaW).